A 926-amino-acid chain; its full sequence is DNA mismatch repair protein MutS (926 aa).

The disordered stretch occupies residues 16 to 40 (VASTPTRRGRPPGSSAARASNGAGS). Over residues 26-40 (PPGSSAARASNGAGS) the composition is skewed to low complexity. An ATP-binding site is contributed by 658-665 (GPNMAGKS).

Belongs to the DNA mismatch repair MutS family.

In terms of biological role, this protein is involved in the repair of mismatches in DNA. It is possible that it carries out the mismatch recognition step. This protein has a weak ATPase activity. The polypeptide is DNA mismatch repair protein MutS (Granulibacter bethesdensis (strain ATCC BAA-1260 / CGDNIH1)).